A 207-amino-acid chain; its full sequence is Imidazole glycerol phosphate synthase subunit HisH (207 aa).

In terms of domain architecture, Glutamine amidotransferase type-1 spans 1–207; that stretch reads MIGIIDYGMG…KRFGQLVEGN (207 aa). The Nucleophile role is filled by Cys79. Residues His185 and Glu187 contribute to the active site.

In terms of assembly, heterodimer of HisH and HisF.

The protein localises to the cytoplasm. The enzyme catalyses 5-[(5-phospho-1-deoxy-D-ribulos-1-ylimino)methylamino]-1-(5-phospho-beta-D-ribosyl)imidazole-4-carboxamide + L-glutamine = D-erythro-1-(imidazol-4-yl)glycerol 3-phosphate + 5-amino-1-(5-phospho-beta-D-ribosyl)imidazole-4-carboxamide + L-glutamate + H(+). It catalyses the reaction L-glutamine + H2O = L-glutamate + NH4(+). Its pathway is amino-acid biosynthesis; L-histidine biosynthesis; L-histidine from 5-phospho-alpha-D-ribose 1-diphosphate: step 5/9. Its function is as follows. IGPS catalyzes the conversion of PRFAR and glutamine to IGP, AICAR and glutamate. The HisH subunit catalyzes the hydrolysis of glutamine to glutamate and ammonia as part of the synthesis of IGP and AICAR. The resulting ammonia molecule is channeled to the active site of HisF. This Shouchella clausii (strain KSM-K16) (Alkalihalobacillus clausii) protein is Imidazole glycerol phosphate synthase subunit HisH.